The primary structure comprises 575 residues: DNA polymerase lambda (575 aa).

Residues 36–132 (EAEEWLSSLR…RLVDVAGFSI (97 aa)) enclose the BRCT domain. The segment at 160 to 205 (ALLQTALPPPPSPTRPVSPPQKTKEAPNTQAQPISDDEASDGEETQ) is disordered. Pro residues predominate over residues 166-178 (LPPPPSPTRPVSP). The segment covering 194–203 (SDDEASDGEE) has biased composition (acidic residues). The DNA-binding stretch occupies residues 265 to 279 (KAYSVQGDKWRALGY). K312 (schiff-base intermediate with DNA) is an active-site residue. The DNA-binding stretch occupies residues 345–348 (GTKT). Residues R386, 417 to 420 (SYRR), and 426 to 429 (GDVD) contribute to the dCTP site. Residues 420–429 (RGKATCGDVD) are involved in primer binding. D427, D429, and D490 together coordinate Mn(2+). Residues 466–505 (ENGQQQKYLGVCRLPGPGWRHRRLDIIVVPYSEFACALLY) are DNA-binding. N513 contributes to the dCTP binding site.

The protein belongs to the DNA polymerase type-X family. As to quaternary structure, interacts with PCNA. Interacts with PAXX; promoting POLL recruitment to double-strand breaks (DSBs) and stimulation of the end-filling activity of POLL. Interacts with XRCC4; promoting POLL recruitment to double-strand breaks (DSBs) and stimulation of the end-filling activity of POLL. Interacts with NHEJ1/XLF; promoting POLL recruitment to double-strand breaks (DSBs) and stimulation of the end-filling activity of POLL. Mn(2+) is required as a cofactor.

The protein localises to the nucleus. It carries out the reaction DNA(n) + a 2'-deoxyribonucleoside 5'-triphosphate = DNA(n+1) + diphosphate. In terms of biological role, DNA polymerase that functions in several pathways of DNA repair. Involved in base excision repair (BER) responsible for repair of lesions that give rise to abasic (AP) sites in DNA. Also contributes to DNA double-strand break repair by non-homologous end joining and homologous recombination. Has both template-dependent and template-independent (terminal transferase) DNA polymerase activities. Also has a 5'-deoxyribose-5-phosphate lyase (dRP lyase) activity. In Macaca fascicularis (Crab-eating macaque), this protein is DNA polymerase lambda.